Reading from the N-terminus, the 95-residue chain is MQIDDTLLNKLEKLSALQINDEKREEIKKQLSEIVSFVDVLNELDLSSDEAVVSSIKGGTPLREDEPHLSNVVDEILKHAPSREGHFFAVPKIIE.

It belongs to the GatC family. In terms of assembly, heterotrimer of A, B and C subunits.

It carries out the reaction L-glutamyl-tRNA(Gln) + L-glutamine + ATP + H2O = L-glutaminyl-tRNA(Gln) + L-glutamate + ADP + phosphate + H(+). The enzyme catalyses L-aspartyl-tRNA(Asn) + L-glutamine + ATP + H2O = L-asparaginyl-tRNA(Asn) + L-glutamate + ADP + phosphate + 2 H(+). Allows the formation of correctly charged Asn-tRNA(Asn) or Gln-tRNA(Gln) through the transamidation of misacylated Asp-tRNA(Asn) or Glu-tRNA(Gln) in organisms which lack either or both of asparaginyl-tRNA or glutaminyl-tRNA synthetases. The reaction takes place in the presence of glutamine and ATP through an activated phospho-Asp-tRNA(Asn) or phospho-Glu-tRNA(Gln). This chain is Aspartyl/glutamyl-tRNA(Asn/Gln) amidotransferase subunit C, found in Campylobacter concisus (strain 13826).